The sequence spans 480 residues: tRNA (guanine(37)-N(1))-methyltransferase (480 aa).

Residues 1–18 (MAAVWRRSARLFILLQRH) constitute a mitochondrion transit peptide. S-adenosyl-L-methionine-binding positions include His273, 311 to 312 (DL), 339 to 340 (DG), and Asn367. The segment at 458 to 480 (HTQDRDTSEEPCPKKQKCEDSTN) is disordered.

It belongs to the class I-like SAM-binding methyltransferase superfamily. TRM5/TYW2 family. In terms of assembly, monomer.

It localises to the mitochondrion matrix. It is found in the nucleus. Its subcellular location is the cytoplasm. It catalyses the reaction guanosine(37) in tRNA + S-adenosyl-L-methionine = N(1)-methylguanosine(37) in tRNA + S-adenosyl-L-homocysteine + H(+). Functionally, involved in mitochondrial tRNA methylation. Specifically methylates the N1 position of guanosine-37 in various tRNAs. Methylation is not dependent on the nature of the nucleoside 5' of the target nucleoside. This is the first step in the biosynthesis of wybutosine (yW), a modified base adjacent to the anticodon of tRNAs and required for accurate decoding. The chain is tRNA (guanine(37)-N(1))-methyltransferase (trmt5) from Danio rerio (Zebrafish).